We begin with the raw amino-acid sequence, 316 residues long: UDP-N-acetylglucosamine transporter yea4 (316 aa).

The Cytoplasmic portion of the chain corresponds to 1-3 (MIA). The chain crosses the membrane as a helical span at residues 4-24 (SALSFIFGGCCSNAYALEALV). The Lumenal segment spans residues 25–31 (REFPSSG). Residues 32 to 52 (ILITFSQFILITIEGLIYFLL) traverse the membrane as a helical segment. At 53–67 (NDVQSLKHPKVPRKR) the chain is on the cytoplasmic side. A helical membrane pass occupies residues 68–88 (WFVVVVMFFAINVLNNVALGF). Topologically, residues 89–120 (DISVPVHIILRSSGPLTTMAVGRILAGKRYSS) are lumenal. The chain crosses the membrane as a helical span at residues 121 to 141 (LQIGSVFILTIGVIIATLGNA). At 142–153 (KDLHLHVESMTR) the chain is on the cytoplasmic side. Residues 154–174 (FGIGFTILVITQILGAIMGLV) traverse the membrane as a helical segment. Residues 175–187 (LENTYRIYGSDWR) are Lumenal-facing. Residues 188 to 208 (ESLFYTHALSLPFFLFLLRPI) traverse the membrane as a helical segment. Topologically, residues 209–214 (RSQWND) are cytoplasmic. A helical transmembrane segment spans residues 215–235 (LFAIHTKGFLNLPSGVWYLCF). Residues 236 to 274 (NTLAQYFCVRGVNALGAETSALTVSVVLNVRKFVSLCLS) lie on the Lumenal side of the membrane. The chain crosses the membrane as a helical span at residues 275 to 295 (LILFENEMGPAVKFGALLVFG). Residues 296–316 (SSAVYASARSKPKTNGLKKND) are Cytoplasmic-facing.

Belongs to the nucleotide-sugar transporter family. SLC35B subfamily.

The protein localises to the endoplasmic reticulum. It is found in the endoplasmic reticulum membrane. In terms of biological role, sugar transporter that specifically mediates the transport of UDP-N-acetylglucosamine (UDP-GlcNAc) and is required for cell wall chitin synthesis. This Schizosaccharomyces pombe (strain 972 / ATCC 24843) (Fission yeast) protein is UDP-N-acetylglucosamine transporter yea4 (yea4).